A 306-amino-acid polypeptide reads, in one-letter code: Probable pinoresinol-lariciresinol reductase 3 (306 aa).

NADP(+) contacts are provided by residues 14-20 (GATGRLG), Arg-39, and Lys-46. The active-site Proton acceptor is the Lys-131. Arg-135 is a binding site for NADP(+).

The protein belongs to the NmrA-type oxidoreductase family. Isoflavone reductase subfamily. In terms of assembly, dimer.

Its function is as follows. Probable reductase that might be involved in the reduction of lariciresinol into secoisolariciresinol. In most plant species, a single enzyme is able to reduce both pinoresinol and lariciresinol efficiently while in Arabidopsis, PRR1 and PRR2 show a strict substrate selectivity for pinoresinol. In Arabidopsis thaliana (Mouse-ear cress), this protein is Probable pinoresinol-lariciresinol reductase 3 (PLR3).